The sequence spans 254 residues: Phycobilisome rod-core linker polypeptide CpcG3 (254 aa).

In terms of domain architecture, PBS-linker spans 11-191 (SSQNHRVKSF…DFQETAGTVK (181 aa)).

This sequence belongs to the phycobilisome linker protein family. In terms of assembly, the phycobilisome is a hemidiscoidal structure that is composed of two distinct substructures: a core complex and a number of rods radiating from the core.

It is found in the cellular thylakoid membrane. In terms of biological role, rod-core linker protein required for attachment of phycocyanin to allophycocyanin in cores of phycobilisomes. Functionally, linker polypeptides determine the state of aggregation and the location of the disk-shaped phycobiliprotein units within the phycobilisome and modulate their spectroscopic properties in order to mediate a directed and optimal energy transfer. In Mastigocladus laminosus (Fischerella sp.), this protein is Phycobilisome rod-core linker polypeptide CpcG3 (cpcG3).